A 203-amino-acid polypeptide reads, in one-letter code: Putative B3 domain-containing protein At1g50220 (203 aa).

Positions 99–195 (DIVGNVALPK…KFIVLNFQHK (97 aa)) form a DNA-binding region, TF-B3.

The protein localises to the nucleus. The sequence is that of Putative B3 domain-containing protein At1g50220 from Arabidopsis thaliana (Mouse-ear cress).